The chain runs to 118 residues: Ribonuclease P protein component (118 aa).

This sequence belongs to the RnpA family. Consists of a catalytic RNA component (M1 or rnpB) and a protein subunit.

The enzyme catalyses Endonucleolytic cleavage of RNA, removing 5'-extranucleotides from tRNA precursor.. In terms of biological role, RNaseP catalyzes the removal of the 5'-leader sequence from pre-tRNA to produce the mature 5'-terminus. It can also cleave other RNA substrates such as 4.5S RNA. The protein component plays an auxiliary but essential role in vivo by binding to the 5'-leader sequence and broadening the substrate specificity of the ribozyme. The protein is Ribonuclease P protein component of Rickettsia felis (strain ATCC VR-1525 / URRWXCal2) (Rickettsia azadi).